The following is a 275-amino-acid chain: Probable CCR4-associated factor 1 homolog 7 (275 aa).

The a divalent metal cation site is built by Asp40, Glu42, Asp167, and Asp236.

It belongs to the CAF1 family. In terms of assembly, component of the CCR4-NOT complex, at least composed of CRR4 and CAF1 proteins. It depends on a divalent metal cation as a cofactor.

It is found in the nucleus. Its subcellular location is the cytoplasm. It catalyses the reaction Exonucleolytic cleavage of poly(A) to 5'-AMP.. In terms of biological role, ubiquitous transcription factor required for a diverse set of processes. It is a component of the CCR4 complex involved in the control of gene expression. In Arabidopsis thaliana (Mouse-ear cress), this protein is Probable CCR4-associated factor 1 homolog 7 (CAF1-7).